Here is a 156-residue protein sequence, read N- to C-terminus: ATP synthase subunit b (156 aa).

Residues 5 to 25 traverse the membrane as a helical segment; that stretch reads LTMIGQAIAFFIFVVFCMKYV.

It belongs to the ATPase B chain family. In terms of assembly, F-type ATPases have 2 components, F(1) - the catalytic core - and F(0) - the membrane proton channel. F(1) has five subunits: alpha(3), beta(3), gamma(1), delta(1), epsilon(1). F(0) has three main subunits: a(1), b(2) and c(10-14). The alpha and beta chains form an alternating ring which encloses part of the gamma chain. F(1) is attached to F(0) by a central stalk formed by the gamma and epsilon chains, while a peripheral stalk is formed by the delta and b chains.

The protein localises to the cell inner membrane. Functionally, f(1)F(0) ATP synthase produces ATP from ADP in the presence of a proton or sodium gradient. F-type ATPases consist of two structural domains, F(1) containing the extramembraneous catalytic core and F(0) containing the membrane proton channel, linked together by a central stalk and a peripheral stalk. During catalysis, ATP synthesis in the catalytic domain of F(1) is coupled via a rotary mechanism of the central stalk subunits to proton translocation. Its function is as follows. Component of the F(0) channel, it forms part of the peripheral stalk, linking F(1) to F(0). The sequence is that of ATP synthase subunit b from Hahella chejuensis (strain KCTC 2396).